Consider the following 108-residue polypeptide: Thioredoxin (108 aa).

The Thioredoxin domain maps to 2–108 (NKIIELTDQN…LKDFLDENIK (107 aa)). Residues cysteine 32 and cysteine 35 are joined by a disulfide bond.

Belongs to the thioredoxin family.

In terms of biological role, participates in various redox reactions through the reversible oxidation of its active center dithiol to a disulfide and catalyzes dithiol-disulfide exchange reactions. The sequence is that of Thioredoxin (trxA) from Buchnera aphidicola subsp. Schizaphis graminum (strain Sg).